The following is a 175-amino-acid chain: ATP synthase subunit b (175 aa).

The helical transmembrane segment at 24–44 (LVLWQIAATVILIIVVRIFLW) threads the bilayer.

The protein belongs to the ATPase B chain family. F-type ATPases have 2 components, F(1) - the catalytic core - and F(0) - the membrane proton channel. F(1) has five subunits: alpha(3), beta(3), gamma(1), delta(1), epsilon(1). F(0) has three main subunits: a(1), b(2) and c(10-14). The alpha and beta chains form an alternating ring which encloses part of the gamma chain. F(1) is attached to F(0) by a central stalk formed by the gamma and epsilon chains, while a peripheral stalk is formed by the delta and b chains.

The protein resides in the cell membrane. Its function is as follows. F(1)F(0) ATP synthase produces ATP from ADP in the presence of a proton or sodium gradient. F-type ATPases consist of two structural domains, F(1) containing the extramembraneous catalytic core and F(0) containing the membrane proton channel, linked together by a central stalk and a peripheral stalk. During catalysis, ATP synthesis in the catalytic domain of F(1) is coupled via a rotary mechanism of the central stalk subunits to proton translocation. In terms of biological role, component of the F(0) channel, it forms part of the peripheral stalk, linking F(1) to F(0). In Acholeplasma laidlawii (strain PG-8A), this protein is ATP synthase subunit b.